An 89-amino-acid polypeptide reads, in one-letter code: uncharacterized protein (89 aa).

A run of 3 helical transmembrane segments spans residues 5 to 25 (AYLVLINLCGFWVMGIDKRKA), 36 to 56 (RLWLIAIVFGALGVWLGMQTF), and 67 to 87 (YGVPLLLVIEAILIAIYYSPF).

It is found in the cell membrane. This is an uncharacterized protein from Bacillus subtilis (strain 168).